We begin with the raw amino-acid sequence, 275 residues long: Orotidine 5'-phosphate decarboxylase (275 aa).

Catalysis depends on Lys-101, which acts as the Proton donor.

This sequence belongs to the OMP decarboxylase family. Type 2 subfamily.

The enzyme catalyses orotidine 5'-phosphate + H(+) = UMP + CO2. It participates in pyrimidine metabolism; UMP biosynthesis via de novo pathway; UMP from orotate: step 2/2. The chain is Orotidine 5'-phosphate decarboxylase from Leptospira interrogans serogroup Icterohaemorrhagiae serovar Lai (strain 56601).